The primary structure comprises 306 residues: UPF0282 protein Pars_1056 (306 aa).

The protein belongs to the UPF0282 family.

This Pyrobaculum arsenaticum (strain DSM 13514 / JCM 11321 / PZ6) protein is UPF0282 protein Pars_1056.